Here is a 616-residue protein sequence, read N- to C-terminus: Dihydroxy-acid dehydratase (616 aa).

D81 lines the Mg(2+) pocket. Residue C122 coordinates [2Fe-2S] cluster. Residues D123 and K124 each contribute to the Mg(2+) site. K124 is modified (N6-carboxylysine). Residue C195 participates in [2Fe-2S] cluster binding. A Mg(2+)-binding site is contributed by E491. S517 serves as the catalytic Proton acceptor.

The protein belongs to the IlvD/Edd family. Homodimer. [2Fe-2S] cluster is required as a cofactor. It depends on Mg(2+) as a cofactor.

The enzyme catalyses (2R)-2,3-dihydroxy-3-methylbutanoate = 3-methyl-2-oxobutanoate + H2O. It catalyses the reaction (2R,3R)-2,3-dihydroxy-3-methylpentanoate = (S)-3-methyl-2-oxopentanoate + H2O. It functions in the pathway amino-acid biosynthesis; L-isoleucine biosynthesis; L-isoleucine from 2-oxobutanoate: step 3/4. The protein operates within amino-acid biosynthesis; L-valine biosynthesis; L-valine from pyruvate: step 3/4. Its function is as follows. Functions in the biosynthesis of branched-chain amino acids. Catalyzes the dehydration of (2R,3R)-2,3-dihydroxy-3-methylpentanoate (2,3-dihydroxy-3-methylvalerate) into 2-oxo-3-methylpentanoate (2-oxo-3-methylvalerate) and of (2R)-2,3-dihydroxy-3-methylbutanoate (2,3-dihydroxyisovalerate) into 2-oxo-3-methylbutanoate (2-oxoisovalerate), the penultimate precursor to L-isoleucine and L-valine, respectively. This chain is Dihydroxy-acid dehydratase, found in Tolumonas auensis (strain DSM 9187 / NBRC 110442 / TA 4).